We begin with the raw amino-acid sequence, 429 residues long: C4-dicarboxylate transport protein (429 aa).

The next 8 helical transmembrane spans lie at V9–P29, L45–M65, L79–I99, G149–G169, V185–M205, L223–A243, I308–M328, and A356–I376.

Belongs to the dicarboxylate/amino acid:cation symporter (DAACS) (TC 2.A.23) family.

It localises to the cell inner membrane. Functionally, responsible for the transport of dicarboxylates such as succinate, fumarate, and malate from the periplasm across the membrane. This is C4-dicarboxylate transport protein from Burkholderia ambifaria (strain ATCC BAA-244 / DSM 16087 / CCUG 44356 / LMG 19182 / AMMD) (Burkholderia cepacia (strain AMMD)).